A 962-amino-acid polypeptide reads, in one-letter code: Leucine--tRNA ligase (962 aa).

The 'HIGH' region motif lies at 68-79 (PYPSGAGLHVGH). The segment at 559-582 (DYSPRTFDPDDANTSPETPLSRNE) is disordered. Polar residues predominate over residues 570-579 (ANTSPETPLS). A 'KMSKS' region motif is present at residues 733–737 (KMGKS). Residue Lys736 coordinates ATP.

It belongs to the class-I aminoacyl-tRNA synthetase family.

Its subcellular location is the cytoplasm. It catalyses the reaction tRNA(Leu) + L-leucine + ATP = L-leucyl-tRNA(Leu) + AMP + diphosphate. The chain is Leucine--tRNA ligase from Streptomyces avermitilis (strain ATCC 31267 / DSM 46492 / JCM 5070 / NBRC 14893 / NCIMB 12804 / NRRL 8165 / MA-4680).